The chain runs to 591 residues: Aspartate--tRNA(Asp/Asn) ligase (591 aa).

E176 serves as a coordination point for L-aspartate. The aspartate stretch occupies residues 200 to 203; sequence QLFK. R222 is a binding site for L-aspartate. ATP contacts are provided by residues 222–224 and Q231; that span reads RDE. Position 450 (H450) interacts with L-aspartate. E484 contributes to the ATP binding site. L-aspartate is bound at residue R491. Position 536–539 (536–539) interacts with ATP; the sequence is GLDR.

It belongs to the class-II aminoacyl-tRNA synthetase family. Type 1 subfamily. As to quaternary structure, homodimer.

It localises to the cytoplasm. It catalyses the reaction tRNA(Asx) + L-aspartate + ATP = L-aspartyl-tRNA(Asx) + AMP + diphosphate. Aspartyl-tRNA synthetase with relaxed tRNA specificity since it is able to aspartylate not only its cognate tRNA(Asp) but also tRNA(Asn). Reaction proceeds in two steps: L-aspartate is first activated by ATP to form Asp-AMP and then transferred to the acceptor end of tRNA(Asp/Asn). This chain is Aspartate--tRNA(Asp/Asn) ligase, found in Bacillus cereus (strain G9842).